Consider the following 183-residue polypeptide: Large ribosomal subunit protein uL6 (183 aa).

The protein belongs to the universal ribosomal protein uL6 family. In terms of assembly, part of the 50S ribosomal subunit.

This protein binds to the 23S rRNA, and is important in its secondary structure. It is located near the subunit interface in the base of the L7/L12 stalk, and near the tRNA binding site of the peptidyltransferase center. The polypeptide is Large ribosomal subunit protein uL6 (Mycoplasmoides gallisepticum (strain R(low / passage 15 / clone 2)) (Mycoplasma gallisepticum)).